We begin with the raw amino-acid sequence, 676 residues long: tRNA 5-methylaminomethyl-2-thiouridine biosynthesis bifunctional protein MnmC (676 aa).

The tRNA (mnm(5)s(2)U34)-methyltransferase stretch occupies residues M1–N241. The tract at residues I268–K676 is FAD-dependent cmnm(5)s(2)U34 oxidoreductase.

The protein in the N-terminal section; belongs to the methyltransferase superfamily. tRNA (mnm(5)s(2)U34)-methyltransferase family. In the C-terminal section; belongs to the DAO family. FAD is required as a cofactor.

Its subcellular location is the cytoplasm. The enzyme catalyses 5-aminomethyl-2-thiouridine(34) in tRNA + S-adenosyl-L-methionine = 5-methylaminomethyl-2-thiouridine(34) in tRNA + S-adenosyl-L-homocysteine + H(+). In terms of biological role, catalyzes the last two steps in the biosynthesis of 5-methylaminomethyl-2-thiouridine (mnm(5)s(2)U) at the wobble position (U34) in tRNA. Catalyzes the FAD-dependent demodification of cmnm(5)s(2)U34 to nm(5)s(2)U34, followed by the transfer of a methyl group from S-adenosyl-L-methionine to nm(5)s(2)U34, to form mnm(5)s(2)U34. This Histophilus somni (strain 2336) (Haemophilus somnus) protein is tRNA 5-methylaminomethyl-2-thiouridine biosynthesis bifunctional protein MnmC.